We begin with the raw amino-acid sequence, 164 residues long: Large ribosomal subunit protein uL15 (164 aa).

Residues 1–14 (MKLNEIQDNPGSSK) show a composition bias toward polar residues. Residues 1–35 (MKLNEIQDNPGSSKSRMRVGRGIGSGKGKTCGRGV) form a disordered region. The span at 21–35 (RGIGSGKGKTCGRGV) shows a compositional bias: gly residues.

This sequence belongs to the universal ribosomal protein uL15 family. In terms of assembly, part of the 50S ribosomal subunit.

Binds to the 23S rRNA. This Methylocella silvestris (strain DSM 15510 / CIP 108128 / LMG 27833 / NCIMB 13906 / BL2) protein is Large ribosomal subunit protein uL15.